Consider the following 216-residue polypeptide: Small ribosomal subunit protein uS3c (216 aa).

Residues 43 to 118 (INNYVKKNMR…KLNITITRIE (76 aa)) enclose the KH type-2 domain.

This sequence belongs to the universal ribosomal protein uS3 family. In terms of assembly, part of the 30S ribosomal subunit.

The protein resides in the plastid. This chain is Small ribosomal subunit protein uS3c (rps3), found in Cuscuta reflexa (Southern Asian dodder).